We begin with the raw amino-acid sequence, 221 residues long: Interleukin-12 subunit alpha (221 aa).

The first 25 residues, 1 to 25 (MCPLRSLLLISTLVLLHHLPHLSLG), serve as a signal peptide directing secretion. Disulfide bonds link Cys39–Cys112, Cys66–Cys198, and Cys87–Cys125. Asn95 is a glycosylation site (N-linked (GlcNAc...) asparagine).

The protein belongs to the IL-6 superfamily. Heterodimer with IL12B; disulfide-linked. This heterodimer is known as interleukin IL-12. Heterodimer with EBI3/IL27B; not disulfide-linked. This heterodimer is known as interleukin IL-35. Interacts with NBR1; this interaction promotes IL-12 secretion.

The protein localises to the secreted. In terms of biological role, heterodimerizes with IL12B to form the IL-12 cytokine or with EBI3/IL27B to form the IL-35 cytokine. IL-12 is primarily produced by professional antigen-presenting cells (APCs) such as B-cells and dendritic cells (DCs) as well as macrophages and granulocytes and regulates T-cell and natural killer-cell responses, induces the production of interferon-gamma (IFN-gamma), favors the differentiation of T-helper 1 (Th1) cells and is an important link between innate resistance and adaptive immunity. Mechanistically, exerts its biological effects through a receptor composed of IL12R1 and IL12R2 subunits. Binding to the receptor results in the rapid tyrosine phosphorylation of a number of cellular substrates including the JAK family kinases TYK2 and JAK2. In turn, recruited STAT4 gets phosphorylated and translocates to the nucleus where it regulates cytokine/growth factor responsive genes. As part of IL-35, plays essential roles in maintaining the immune homeostasis of the liver microenvironment and also functions as an immune-suppressive cytokine. Mediates biological events through unconventional receptors composed of IL12RB2 and gp130/IL6ST heterodimers or homodimers. Signaling requires the transcription factors STAT1 and STAT4, which form a unique heterodimer that binds to distinct DNA sites. The protein is Interleukin-12 subunit alpha (IL12A) of Ovis aries (Sheep).